The sequence spans 1768 residues: Callose synthase 11 (1768 aa).

Over 1–308 (MRRQRPSVAT…WNVYRSFDRL (308 aa)) the chain is Cytoplasmic. A helical membrane pass occupies residues 309-329 (WILLLLYLQAAIIVATSDVKF). Residues 330–335 (PWQDRD) are Extracellular-facing. A helical membrane pass occupies residues 336–356 (VEVALLTVFISWAGLRLLQSV). The Cytoplasmic portion of the chain corresponds to 357-370 (LDASTQYSLVSRET). Residues 371-391 (YWLFIRLTLKFVVAVAWTVLF) traverse the membrane as a helical segment. The Extracellular segment spans residues 392–421 (SVFYARIWSQKNKDGVWSRAANERVVTFLK). A helical membrane pass occupies residues 422–442 (VVFVYVIPELLALVLFIVPCI). Residues 443–480 (RNWVEELNLGVVYFLTWWFYSKTFVGRGMREGLVDNVK) are Cytoplasmic-facing. The chain crosses the membrane as a helical span at residues 481–501 (YTLFWIIVLATKFIFSYFLQI). Topologically, residues 502–530 (RPLIAPTRALLNLKDATYNWHEFFGSTHR) are extracellular. A helical transmembrane segment spans residues 531 to 551 (IAVGMLWLPVILVYLMDLQIW). At 552–1341 (YSIYSSLVGA…FFRMLSFFYT (790 aa)) the chain is on the cytoplasmic side. Residues 1342 to 1362 (TVGYYFNTMLIVFTVYAFLWG) traverse the membrane as a helical segment. Residues 1363–1386 (RLYLALSGVEKIAKDRSSSNEALG) lie on the Extracellular side of the membrane. Residues 1387–1407 (AILNQQFIIQLGLFTALPMIL) form a helical membrane-spanning segment. At 1408–1413 (ENSLER) the chain is on the cytoplasmic side. A helical transmembrane segment spans residues 1414-1434 (GFLPAVWDFITMQLQLASFFY). The Extracellular portion of the chain corresponds to 1435 to 1481 (TFSMGTRTHYFGRTILHGGAKYRATGRGFVVEHKKFAENYRLYARTH). The helical transmembrane segment at 1482-1502 (FIKAIELAIILLVYAAYSPLA) threads the bilayer. At 1503 to 1508 (KSSFVY) the chain is on the cytoplasmic side. The chain crosses the membrane as a helical span at residues 1509 to 1529 (ILMTISSWFLITSWIISPFLF). Topologically, residues 1530 to 1583 (NPSGFDWLKTVNDFDDFIAWLWSRGGLFTKADQSWFTWWNEEQEHLKTTGVWGK) are extracellular. A helical transmembrane segment spans residues 1584–1604 (LLEIILDLRFFFFQYSIVYHL). Residues 1605–1612 (RIAENRTS) lie on the Cytoplasmic side of the membrane. Residues 1613–1633 (IGVYLISWGCIIGIVAIYITT) form a helical membrane-spanning segment. The Extracellular segment spans residues 1634-1649 (IYAQKRYSVKEHIKYR). Residues 1650-1670 (FIQFLVILLTVLVVVMMLQFT) form a helical membrane-spanning segment. Topologically, residues 1671–1673 (KLT) are cytoplasmic. Residues 1674–1694 (VVDLLISLLAFVPTGWGLISI) form a helical membrane-spanning segment. Residues 1695 to 1719 (AQVLKPFLLSTVVWDTVISVARFYD) lie on the Extracellular side of the membrane. Residues 1720–1740 (LFFGLIVMAPVALLSWLPGFQ) form a helical membrane-spanning segment. The Cytoplasmic portion of the chain corresponds to 1741 to 1768 (NMQTRILFNEAFSRGLQISIILAGKKST).

This sequence belongs to the glycosyltransferase 48 family. As to expression, ubiquitous.

It is found in the cell membrane. It catalyses the reaction [(1-&gt;3)-beta-D-glucosyl](n) + UDP-alpha-D-glucose = [(1-&gt;3)-beta-D-glucosyl](n+1) + UDP + H(+). Required the formation of the callose wall separating the tetraspores (interstitial wall), but not for the callose wall surrounding the pollen mother cells (peripheral wall). Functionally redudant to CALS12 (GSL5). During plant growth and development, callose is found as a transitory component of the cell plate in dividing cells, is a major component of pollen mother cell walls and pollen tubes, and is found as a structural component of plasmodesmatal canals. This is Callose synthase 11 (CALS11) from Arabidopsis thaliana (Mouse-ear cress).